Reading from the N-terminus, the 224-residue chain is Glutathione peroxidase 3 (224 aa).

The signal sequence occupies residues 1-18; it reads MAPGSVLSLAVALATIIG. Asparagine 38 carries N-linked (GlcNAc...) asparagine glycosylation. Residue cysteine 73 is part of the active site.

Belongs to the glutathione peroxidase family.

It localises to the secreted. The protein localises to the extracellular space. The catalysed reaction is 2 glutathione + H2O2 = glutathione disulfide + 2 H2O. The sequence is that of Glutathione peroxidase 3 (gpx-3) from Caenorhabditis elegans.